The sequence spans 172 residues: Phosphopantetheine adenylyltransferase (172 aa).

Residue threonine 13 participates in substrate binding. ATP-binding positions include 13 to 14 (TF) and histidine 21. Positions 45, 81, and 95 each coordinate substrate. ATP-binding positions include 96–98 (GLR), glutamate 106, and 131–137 (SQFISSR).

The protein belongs to the bacterial CoaD family. As to quaternary structure, homohexamer. Mg(2+) serves as cofactor.

The protein localises to the cytoplasm. The catalysed reaction is (R)-4'-phosphopantetheine + ATP + H(+) = 3'-dephospho-CoA + diphosphate. Its pathway is cofactor biosynthesis; coenzyme A biosynthesis; CoA from (R)-pantothenate: step 4/5. Its function is as follows. Reversibly transfers an adenylyl group from ATP to 4'-phosphopantetheine, yielding dephospho-CoA (dPCoA) and pyrophosphate. In Rhodospirillum rubrum (strain ATCC 11170 / ATH 1.1.1 / DSM 467 / LMG 4362 / NCIMB 8255 / S1), this protein is Phosphopantetheine adenylyltransferase.